The chain runs to 380 residues: Cytochrome b (380 aa).

A run of 4 helical transmembrane segments spans residues 34 to 54 (FGSL…LLAM), 78 to 99 (WLIR…YLHI), 114 to 134 (WNTG…GYVL), and 179 to 199 (FFAL…IHLT). Histidine 84 and histidine 98 together coordinate heme b. The heme b site is built by histidine 183 and histidine 197. Residue histidine 202 participates in a ubiquinone binding. Helical transmembrane passes span 227–247 (LKDI…ALFS), 289–309 (LGGV…PFLH), 321–341 (LSQL…WVGS), and 348–368 (FIII…ILFP).

It belongs to the cytochrome b family. The cytochrome bc1 complex contains 11 subunits: 3 respiratory subunits (MT-CYB, CYC1 and UQCRFS1), 2 core proteins (UQCRC1 and UQCRC2) and 6 low-molecular weight proteins (UQCRH/QCR6, UQCRB/QCR7, UQCRQ/QCR8, UQCR10/QCR9, UQCR11/QCR10 and a cleavage product of UQCRFS1). This cytochrome bc1 complex then forms a dimer. Heme b is required as a cofactor.

Its subcellular location is the mitochondrion inner membrane. In terms of biological role, component of the ubiquinol-cytochrome c reductase complex (complex III or cytochrome b-c1 complex) that is part of the mitochondrial respiratory chain. The b-c1 complex mediates electron transfer from ubiquinol to cytochrome c. Contributes to the generation of a proton gradient across the mitochondrial membrane that is then used for ATP synthesis. In Macronectes halli (Hall's giant petrel), this protein is Cytochrome b (MT-CYB).